Consider the following 167-residue polypeptide: Cytochrome c-type biogenesis protein CcmE (167 aa).

Topologically, residues 1-7 are cytoplasmic; that stretch reads MTRKQRR. A helical; Signal-anchor for type II membrane protein transmembrane segment spans residues 8–28; it reads LLMIGGAGVVLIVAVGLVLNA. Residues 29-167 lie on the Periplasmic side of the membrane; the sequence is LRDSIVFFST…TSANAAEGGK (139 aa). Heme-binding residues include H122 and Y126. Residues 137–150 show a composition bias toward basic and acidic residues; it reads KDGHWKDDYGKKSP. The interval 137–167 is disordered; the sequence is KDGHWKDDYGKKSPGETTAGQTSANAAEGGK. Residues 151 to 161 show a composition bias toward polar residues; sequence GETTAGQTSAN.

The protein belongs to the CcmE/CycJ family.

It localises to the cell inner membrane. Functionally, heme chaperone required for the biogenesis of c-type cytochromes. Transiently binds heme delivered by CcmC and transfers the heme to apo-cytochromes in a process facilitated by CcmF and CcmH. This chain is Cytochrome c-type biogenesis protein CcmE, found in Rhodopseudomonas palustris (strain ATCC BAA-98 / CGA009).